A 479-amino-acid polypeptide reads, in one-letter code: Anaerobic nitric oxide reductase flavorubredoxin (479 aa).

Residues 30 to 210 are zinc metallo-hydrolase; it reads LRGSSYNSYL…PFSRLVTPKI (181 aa). Residues His79, Glu81, Asp83, His147, Asp166, and His227 each contribute to the Fe cation site. The region spanning 254–393 is the Flavodoxin-like domain; sequence ITIVYDTMSN…LCREHGREIA (140 aa). Residues 260–264 and 342–369 contribute to the FMN site; these read TMSNN and AFGSHGWSGGAVDRLSTRLQDAGFEMSL. Residues 423–474 enclose the Rubredoxin-like domain; it reads GPRMQCSVCQWIYDPAKGEPMQDVAPGTPWSEVPDNFLCPECSLGKDVFDEL. Fe cation-binding residues include Cys428, Cys431, Cys461, and Cys464.

This sequence in the N-terminal section; belongs to the zinc metallo-hydrolase group 3 family. As to quaternary structure, homotetramer. The cofactor is Fe cation. Requires FMN as cofactor.

The protein resides in the cytoplasm. It participates in nitrogen metabolism; nitric oxide reduction. Anaerobic nitric oxide reductase; uses NADH to detoxify nitric oxide (NO), protecting several 4Fe-4S NO-sensitive enzymes. Has at least 2 reductase partners, only one of which (NorW, flavorubredoxin reductase) has been identified. NO probably binds to the di-iron center; electrons enter from the NorW at rubredoxin and are transferred sequentially to the FMN center and the di-iron center. Also able to function as an aerobic oxygen reductase. This chain is Anaerobic nitric oxide reductase flavorubredoxin, found in Escherichia coli (strain UTI89 / UPEC).